A 240-amino-acid chain; its full sequence is NAD-dependent protein deacylase Sir2 (240 aa).

In terms of domain architecture, Deacetylase sirtuin-type spans 1 to 235 (MQVTVLSGAG…PTLLQRLPEL (235 aa)). Residue 8–28 (GAGISAESGVPTFRDAETGLW) participates in NAD(+) binding. Residues Y53 and R56 each contribute to the substrate site. 86 to 89 (QNID) is an NAD(+) binding site. Catalysis depends on H104, which acts as the Proton acceptor. Residues C112, C115, C138, and C140 each coordinate Zn(2+). NAD(+)-binding positions include 177-179 (GTS), 203-205 (NPE), and A221.

Belongs to the sirtuin family. Class III subfamily. As to quaternary structure, interacts with both Ku and LigD; may form a trimeric complex during NHEJ. Requires Zn(2+) as cofactor.

It is found in the cytoplasm. It catalyses the reaction N(6)-succinyl-L-lysyl-[protein] + NAD(+) + H2O = 2''-O-succinyl-ADP-D-ribose + nicotinamide + L-lysyl-[protein]. It carries out the reaction N(6)-acetyl-L-lysyl-[protein] + NAD(+) + H2O = 2''-O-acetyl-ADP-D-ribose + nicotinamide + L-lysyl-[protein]. Its function is as follows. NAD-dependent lysine deacetylase and desuccinylase that specifically removes acetyl and succinyl groups on target proteins. Modulates the activities of several proteins which are inactive in their acylated form. In terms of biological role, involved in non-homologous end joining (NHEJ) repair of blunt, 5' overhang and 3' overhang DNA double strand breaks (DSB). Overexpression increases the efficiency of NHEJ of the above DSBs 2-fold with no effect on repair fidelity. The sequence is that of NAD-dependent protein deacylase Sir2 (sir2) from Mycolicibacterium smegmatis (strain ATCC 700084 / mc(2)155) (Mycobacterium smegmatis).